Consider the following 793-residue polypeptide: Endonuclease MutS2 (793 aa).

329–336 (GPNTGGKT) contacts ATP. A disordered region spans residues 611–639 (LARARQAVEPTEEEQRARRRGEVPRGLKP). A compositionally biased stretch (basic and acidic residues) spans 623 to 639 (EEQRARRRGEVPRGLKP). The region spanning 717–792 (VDLRGLMVEE…GDGVTVAKLR (76 aa)) is the Smr domain.

It belongs to the DNA mismatch repair MutS family. MutS2 subfamily. Homodimer. Binds to stalled ribosomes, contacting rRNA.

Functionally, endonuclease that is involved in the suppression of homologous recombination and thus may have a key role in the control of bacterial genetic diversity. In terms of biological role, acts as a ribosome collision sensor, splitting the ribosome into its 2 subunits. Detects stalled/collided 70S ribosomes which it binds and splits by an ATP-hydrolysis driven conformational change. Acts upstream of the ribosome quality control system (RQC), a ribosome-associated complex that mediates the extraction of incompletely synthesized nascent chains from stalled ribosomes and their subsequent degradation. Probably generates substrates for RQC. In Symbiobacterium thermophilum (strain DSM 24528 / JCM 14929 / IAM 14863 / T), this protein is Endonuclease MutS2.